Here is a 341-residue protein sequence, read N- to C-terminus: Glycerol-3-phosphate dehydrogenase [NAD(P)+] (341 aa).

Residues Ser-14, Phe-15, Arg-35, and Lys-108 each coordinate NADPH. The sn-glycerol 3-phosphate site is built by Lys-108 and Gly-136. Residue Ala-140 participates in NADPH binding. Positions 191, 244, 254, 255, and 256 each coordinate sn-glycerol 3-phosphate. Lys-191 (proton acceptor) is an active-site residue. Residue Arg-255 participates in NADPH binding. Positions 279 and 281 each coordinate NADPH.

Belongs to the NAD-dependent glycerol-3-phosphate dehydrogenase family.

Its subcellular location is the cytoplasm. It catalyses the reaction sn-glycerol 3-phosphate + NAD(+) = dihydroxyacetone phosphate + NADH + H(+). The catalysed reaction is sn-glycerol 3-phosphate + NADP(+) = dihydroxyacetone phosphate + NADPH + H(+). It functions in the pathway membrane lipid metabolism; glycerophospholipid metabolism. Catalyzes the reduction of the glycolytic intermediate dihydroxyacetone phosphate (DHAP) to sn-glycerol 3-phosphate (G3P), the key precursor for phospholipid synthesis. The chain is Glycerol-3-phosphate dehydrogenase [NAD(P)+] from Pseudomonas putida (strain ATCC 700007 / DSM 6899 / JCM 31910 / BCRC 17059 / LMG 24140 / F1).